The chain runs to 61 residues: Metallothionein-1H (61 aa).

An N-acetylmethionine modification is found at methionine 1. Residues 1-29 form a beta region; it reads MDPNCSCEAGGSCACAGSCKCKKCKCTSC. A divalent metal cation is bound by residues cysteine 5, cysteine 7, cysteine 13, cysteine 15, cysteine 19, cysteine 21, cysteine 24, cysteine 26, cysteine 29, cysteine 33, cysteine 34, cysteine 36, cysteine 37, cysteine 41, cysteine 44, cysteine 48, cysteine 50, and cysteine 57. An alpha region spans residues 30 to 61; the sequence is KKSCCSCCPLGCAKCAQGCICKGASEKCSCCA. Phosphoserine is present on serine 58. A divalent metal cation contacts are provided by cysteine 59 and cysteine 60.

It belongs to the metallothionein superfamily. Type 1 family. As to quaternary structure, monomer.

Metallothioneins have a high content of cysteine residues that bind various heavy metals; these proteins are transcriptionally regulated by both heavy metals and glucocorticoids. The chain is Metallothionein-1H (MT1H) from Homo sapiens (Human).